We begin with the raw amino-acid sequence, 152 residues long: MMLYRIVMRRYLASTWTGYGAETYGGRWNHKGHAAIYLASSVSLAMLETLVHIQDSSTLSEFELFQIEIEDSNIMLLQPQDWPTNWRSDPAPATTMDIGTEWLESESSLGLLVPSTLVPTENNLLLNPRHKSFQTCLSSVQPLSFAFDPRLK.

Belongs to the MbcT/ParT/Res family. Homodimer. Forms a complex with cognate antitoxin Xre.

Functionally, toxic component of a type II toxin-antitoxin (TA) system. Expression in E.coli inhibits cell growth; bacteriostasis is neutralized by expression of cognate antitoxin Xre. Probably depletes intracellular NAD(+). This is Toxin Res from Yersinia enterocolitica serotype O:8 / biotype 1B (strain NCTC 13174 / 8081).